The following is a 361-amino-acid chain: MEMMQDSFQVHRIPQSKYVDGVRWLPQASALNRFFATASYDADCDSSSIEIQSLDPNPRGNHNTNPLIESLSSWTSPSRVSSLEVAGNGGGGGSFKPMVSAATSSGSLHVLMIDLVEGAAIEEFYAAEGERFHVGRVEGVDWREGGECVTVGEDGRVNVVKIVNGEGLRYRKVFDGNGLVAYRAVKWASPTEFVTGGYGFGLQLWDQRKSGEAVSQLKGNWFQGKTSAIVHSIDIHPSRKHTCIAGGSSGTVFAWDLRWPQQPIVLSGVGASENINNPLSESEVWEVQYDSYTKSNVSSSRILPVMTCSEDGILGIIEQGEEPIELLAEPCAINSFDIDRQNPQDVICSLEWESIAVFSRP.

Residues 51 to 73 (IQSLDPNPRGNHNTNPLIESLSS) form a disordered region. 3 WD repeats span residues 132–173 (FHVG…YRKV), 177–215 (NGLV…EAVS), and 225–265 (KTSA…QPIV).

In terms of assembly, part of the nuclear pore complex (NPC). The NPC has an eight-fold symmetrical structure comprising a central transport channel and two rings, the cytoplasmic and nuclear rings, to which eight filaments are attached. The cytoplasmic filaments have loose ends, while the nuclear filaments are joined in a distal ring, forming a nuclear basket. NPCs are highly dynamic in configuration and composition, and can be devided in 3 subcomplexes, the NUP62 subcomplex, the NUP107-160 subcomplex and the NUP93 subcomplex, containing approximately 30 different nucleoporin proteins.

It localises to the nucleus envelope. The protein localises to the nucleus. The protein resides in the nuclear pore complex. The polypeptide is Nuclear pore complex protein NUP43 (Arabidopsis thaliana (Mouse-ear cress)).